The following is a 155-amino-acid chain: Ribosomal RNA large subunit methyltransferase H (155 aa).

Residues Leu72, Gly104, and 123–128 (LAKITL) contribute to the S-adenosyl-L-methionine site.

The protein belongs to the RNA methyltransferase RlmH family. In terms of assembly, homodimer.

It is found in the cytoplasm. It catalyses the reaction pseudouridine(1915) in 23S rRNA + S-adenosyl-L-methionine = N(3)-methylpseudouridine(1915) in 23S rRNA + S-adenosyl-L-homocysteine + H(+). Specifically methylates the pseudouridine at position 1915 (m3Psi1915) in 23S rRNA. The polypeptide is Ribosomal RNA large subunit methyltransferase H (Mycoplasma capricolum subsp. capricolum (strain California kid / ATCC 27343 / NCTC 10154)).